Reading from the N-terminus, the 418-residue chain is uncharacterized protein (418 aa).

This is an uncharacterized protein from Escherichia coli (strain K12).